A 305-amino-acid polypeptide reads, in one-letter code: NADH-cytochrome b5 reductase 1 (305 aa).

The helical transmembrane segment at 8 to 28 threads the bilayer; that stretch reads VLLASLGVGLFTLFGLALGTY. The FAD-binding FR-type domain maps to 44-156; the sequence is DEKYLLRLLD…RGPSGLLSYA (113 aa). FAD contacts are provided by residues 136–166 and 175–210; these read DSLKIGDVVEFRGPSGLLSYAGKGNFNIQPN and VAKKLGMIAGGTGITPMLQLIRAILKVPEDPTQCFL.

Belongs to the flavoprotein pyridine nucleotide cytochrome reductase family. The cofactor is FAD.

Its subcellular location is the membrane. The catalysed reaction is 2 Fe(III)-[cytochrome b5] + NADH = 2 Fe(II)-[cytochrome b5] + NAD(+) + H(+). In terms of biological role, NADH-cytochrome b5 reductases are involved in desaturation and elongation of fatty acids, cholesterol biosynthesis, drug metabolism, and, in erythrocyte, methemoglobin reduction. The chain is NADH-cytochrome b5 reductase 1 (Cyb5r1) from Rattus norvegicus (Rat).